The primary structure comprises 175 residues: MNFIPISLIFSGHGFGFNTNIFETNVINLAVVIGVVVSFVGDAVRELLKNRKETIVNNLREADNRALEAQEKLSQAKAQLADAQKKATEIREQGLVAAEQEKKLCIKQAEEDAARLKQVQQDTIRFQQQKAIQQISQQIVSLALQQVRQKLKMGASAPFHVSVNKSKIDLFKRSL.

The helical transmembrane segment at valine 26–valine 44 threads the bilayer.

This sequence belongs to the ATPase B chain family. In terms of assembly, F-type ATPases have 2 components, F(1) - the catalytic core - and F(0) - the membrane proton channel. F(1) has five subunits: alpha(3), beta(3), gamma(1), delta(1), epsilon(1). F(0) has four main subunits: a(1), b(1), b'(1) and c(10-14). The alpha and beta chains form an alternating ring which encloses part of the gamma chain. F(1) is attached to F(0) by a central stalk formed by the gamma and epsilon chains, while a peripheral stalk is formed by the delta, b and b' chains.

The protein localises to the plastid. It localises to the chloroplast thylakoid membrane. Functionally, f(1)F(0) ATP synthase produces ATP from ADP in the presence of a proton or sodium gradient. F-type ATPases consist of two structural domains, F(1) containing the extramembraneous catalytic core and F(0) containing the membrane proton channel, linked together by a central stalk and a peripheral stalk. During catalysis, ATP synthesis in the catalytic domain of F(1) is coupled via a rotary mechanism of the central stalk subunits to proton translocation. In terms of biological role, component of the F(0) channel, it forms part of the peripheral stalk, linking F(1) to F(0). This is ATP synthase subunit b, chloroplastic from Tupiella akineta (Green alga).